A 634-amino-acid chain; its full sequence is MMRTWMVYVVGLVGELYGSQVEETREMREMKEALERLFSRRLSDSEIEMVESLENGGNFETRVLVPVIFHKDKVVVSPAARYRDIEKEERVYVEEVIRRLRSLVWHSMVYIYVPKNNDWIMDLICKVSGMSSPQRLDDVALYKDTGGNCGMKFVDLVNKMFKQNADMLKKFGDLLSNGAETRILELPDSLSEDERRREVEMLQRVKEYGKMLCTEDKQKEIVEAQKIMCDACEQIWRREEDRKEFTMEIYSRYLNMKVMRGGVERDVEDPLIDHMDHYMLISTHKKYKCMDVVAELVRKVFVEDKDIEDSDVMSAVCSVRERKRLEEMREMEERKRKEEERAKNEEELLRMVEREEREKREESKGRGKKKRGNRGAGESKEESKGRGKRKRGNKGAGESKEEDRGEEGGVEAEDPLEEMAVGEAWRKKKGSGEKRISEEHHYKVHSRVLRWKKDAGEIKRELDEGYEKKWKNRSIEEIKEQKKVHDIVEVMKLLRDKEKCDRFFVRTGKYMKGKSERWKMVANGILEEGGEKKVGKVEVGLFKGEGGESVVYHLMFRPTETERTGRVGGSSFGKYDDVDEIKKEKSSDMFGFRYPSGVRCEMTSNRNEFRIEYRNRKNTSEVLRTLTILRIPET.

2 stretches are compositionally biased toward basic and acidic residues: residues Arg-354 to Gly-365 and Gly-397 to Glu-407. Residues Arg-354–Glu-438 are disordered. Over residues Gly-408–Glu-417 the composition is skewed to acidic residues.

It belongs to the UPF0329 family.

This chain is UPF0329 protein ECU11_2090, found in Encephalitozoon cuniculi (strain GB-M1) (Microsporidian parasite).